An 80-amino-acid polypeptide reads, in one-letter code: Large ribosomal subunit protein uL29 (80 aa).

Belongs to the universal ribosomal protein uL29 family.

The chain is Large ribosomal subunit protein uL29 (rpmC) from Mycobacterium leprae (strain TN).